Here is a 163-residue protein sequence, read N- to C-terminus: Probable chemoreceptor glutamine deamidase CheD (163 aa).

The protein belongs to the CheD family.

The catalysed reaction is L-glutaminyl-[protein] + H2O = L-glutamyl-[protein] + NH4(+). Probably deamidates glutamine residues to glutamate on methyl-accepting chemotaxis receptors (MCPs), playing an important role in chemotaxis. The sequence is that of Probable chemoreceptor glutamine deamidase CheD from Borreliella burgdorferi (strain ATCC 35210 / DSM 4680 / CIP 102532 / B31) (Borrelia burgdorferi).